The primary structure comprises 432 residues: Putative transposase A625R (432 aa).

4 residues coordinate Zn(2+): cysteine 375, cysteine 378, cysteine 393, and cysteine 395.

The protein in the N-terminal section; belongs to the transposase 2 family. This sequence in the C-terminal section; belongs to the transposase 35 family.

The protein is Putative transposase A625R of Chlorella (PBCV-1).